The chain runs to 136 residues: Nuclear receptor 2C2-associated protein (136 aa).

It belongs to the NR2C2AP family.

The protein localises to the nucleus. Functionally, may act as a repressor of nr2c2-mediated transactivation by suppressing the binding between nr2c2 and its response element in target genes. This chain is Nuclear receptor 2C2-associated protein (nr2c2ap), found in Xenopus laevis (African clawed frog).